A 347-amino-acid chain; its full sequence is Quinolinate synthase (347 aa).

Positions 47 and 68 each coordinate iminosuccinate. Position 113 (C113) interacts with [4Fe-4S] cluster. Iminosuccinate is bound by residues 139–141 (YAN) and S156. A [4Fe-4S] cluster-binding site is contributed by C200. Iminosuccinate-binding positions include 226 to 228 (HPE) and T243. C297 is a [4Fe-4S] cluster binding site.

Belongs to the quinolinate synthase family. Type 1 subfamily. It depends on [4Fe-4S] cluster as a cofactor.

The protein localises to the cytoplasm. It catalyses the reaction iminosuccinate + dihydroxyacetone phosphate = quinolinate + phosphate + 2 H2O + H(+). It participates in cofactor biosynthesis; NAD(+) biosynthesis; quinolinate from iminoaspartate: step 1/1. Functionally, catalyzes the condensation of iminoaspartate with dihydroxyacetone phosphate to form quinolinate. The protein is Quinolinate synthase of Escherichia coli O7:K1 (strain IAI39 / ExPEC).